We begin with the raw amino-acid sequence, 431 residues long: MSVIQDLQSRGLIAQTTDIEALDALLNEQKISLYCGFDPTADSLHIGHLLPVLALRRFQQAGHTPIALVGGATGMIGDPSFKAAERSLNSAETVAGWVESIRSQLTPFLSFEGGNAAIMANNADWFGKMNCLDFLRDIGKHFSVNAMLNKESVKQRIDRDGAGISFTEFAYSLLQGYDFAELNKRHGAVLEIGGSDQWGNITAGIDLTRRLYQKQVFGLTLPLVTKSDGTKFGKTEGGAVWLNAKKTSPYQFYQFWLKVADADVYKFLKYFTFLSIEEIDAIEAKDKASGSKPEAQRILAEEMTRLIHGEEALAAAQRISESLFAEDQSSLTESDFEQLALDGLPAFEVSDGINVVEALVKTGLASSNKEARGFVNSKAVLLNGKPAEANNPNHAAERPDDACLLNGEHKRFGKYTILRRGKRNHALLVWK.

Residue tyrosine 34 participates in L-tyrosine binding. The 'HIGH' region motif lies at 39-48 (PTADSLHIGH). Residues tyrosine 171 and glutamine 175 each contribute to the L-tyrosine site. The 'KMSKS' region signature appears at 231 to 235 (KFGKT). Lysine 234 serves as a coordination point for ATP. In terms of domain architecture, S4 RNA-binding spans 353 to 422 (INVVEALVKT…GKYTILRRGK (70 aa)).

It belongs to the class-I aminoacyl-tRNA synthetase family. TyrS type 1 subfamily. In terms of assembly, homodimer.

Its subcellular location is the cytoplasm. The catalysed reaction is tRNA(Tyr) + L-tyrosine + ATP = L-tyrosyl-tRNA(Tyr) + AMP + diphosphate + H(+). In terms of biological role, catalyzes the attachment of tyrosine to tRNA(Tyr) in a two-step reaction: tyrosine is first activated by ATP to form Tyr-AMP and then transferred to the acceptor end of tRNA(Tyr). The polypeptide is Tyrosine--tRNA ligase (Neisseria meningitidis serogroup C / serotype 2a (strain ATCC 700532 / DSM 15464 / FAM18)).